A 697-amino-acid chain; its full sequence is CENP-A multicopy suppressor protein 2 (697 aa).

The GATA-type; atypical zinc finger occupies 351–378 (CQNCGTIKTANWRNATYMNITLMLCNAC). The disordered stretch occupies residues 443–484 (PLNRLTSLDSTHSAPDPNHISKPSVVNQQKSRGGPRTAKLKN). Positions 445 to 455 (NRLTSLDSTHS) are enriched in polar residues.

As to quaternary structure, interacts with CENP-A.

The protein resides in the nucleus. It is found in the chromosome. Its subcellular location is the centromere. Functionally, required for proper chromosome segregation via regulation of CENP-A localization to the centromere. This chain is CENP-A multicopy suppressor protein 2 (ams2), found in Schizosaccharomyces pombe (strain 972 / ATCC 24843) (Fission yeast).